The primary structure comprises 438 residues: Xylose isomerase (438 aa).

Catalysis depends on residues His-100 and Asp-103. Residues Glu-231, Glu-267, His-270, Asp-295, Asp-306, Asp-308, and Asp-338 each coordinate Mg(2+).

This sequence belongs to the xylose isomerase family. As to quaternary structure, homotetramer. Mg(2+) serves as cofactor.

It is found in the cytoplasm. The catalysed reaction is alpha-D-xylose = alpha-D-xylulofuranose. The chain is Xylose isomerase (xylA) from Thermoanaerobacter pseudethanolicus (strain ATCC 33223 / 39E) (Clostridium thermohydrosulfuricum).